A 198-amino-acid polypeptide reads, in one-letter code: Recombination protein RecR (198 aa).

The C4-type zinc finger occupies 57–72 (CSECQTLTDKDPCAVC). The Toprim domain maps to 80–175 (RIICVVEGVP…KVTRIAQGIP (96 aa)).

The protein belongs to the RecR family.

Functionally, may play a role in DNA repair. It seems to be involved in an RecBC-independent recombinational process of DNA repair. It may act with RecF and RecO. This chain is Recombination protein RecR, found in Anaeromyxobacter sp. (strain Fw109-5).